The primary structure comprises 135 residues: Probable histone H2A.7 (135 aa).

This sequence belongs to the histone H2A family. As to quaternary structure, the nucleosome is a histone octamer containing two molecules each of H2A, H2B, H3 and H4 assembled in one H3-H4 heterotetramer and two H2A-H2B heterodimers. The octamer wraps approximately 147 bp of DNA.

It localises to the nucleus. It is found in the chromosome. In terms of biological role, core component of nucleosome. Nucleosomes wrap and compact DNA into chromatin, limiting DNA accessibility to the cellular machineries which require DNA as a template. Histones thereby play a central role in transcription regulation, DNA repair, DNA replication and chromosomal stability. DNA accessibility is regulated via a complex set of post-translational modifications of histones, also called histone code, and nucleosome remodeling. The protein is Probable histone H2A.7 of Oryza sativa subsp. indica (Rice).